We begin with the raw amino-acid sequence, 318 residues long: C1GALT1-specific chaperone 1 (318 aa).

The Cytoplasmic segment spans residues 1–6; it reads MLSESS. Residues 7–26 traverse the membrane as a helical; Signal-anchor for type II membrane protein segment; sequence SFLKGVMLGSIFCALITMLG. Topologically, residues 27 to 318 are lumenal; the sequence is HIRIGHGSRM…FLPPNGSDND (292 aa).

This sequence belongs to the glycosyltransferase 31 family. Beta3-Gal-T subfamily. In terms of assembly, associates with core 1 beta-3-galactosyltransferase (C1GALT1), probably not with the soluble active form.

The protein localises to the membrane. Its function is as follows. Probable chaperone required for the generation of 1 O-glycan Gal-beta1-3GalNAc-alpha1-Ser/Thr (T antigen), which is a precursor for many extended O-glycans in glycoproteins. Probably acts as a specific molecular chaperone assisting the folding/stability of core 1 beta-3-galactosyltransferase (C1GALT1). The sequence is that of C1GALT1-specific chaperone 1 (C1GALT1C1) from Bos taurus (Bovine).